We begin with the raw amino-acid sequence, 445 residues long: MDCDNGVVSEISDDKELLNLETVIPPPPNDSGHEFIGPSSGPPQVTITPSGVQSGSANGVSTSQQQQYSAEYLSQLLKDKKQLAAFPNVFHHLERLADEEINKVRVVLFQCEFSKESAPLPDAEGDSTVHTEKVFVPAKEHPDYNFVGRILGPRGMTAKQLEQETGCKIMVRGRGSMRDKKKEELNRGKPNWEHLSEELHVLIQCEDTENRAKVKLMRAVEEVRKLLVPAPEGEDDLKRKQLMELAIINGTYRSGTDQSALAAAQLAAVKHQQQPFAAALQAAALQRGVLPMMANGLSRSPTMAVCGAPIVMSPSGRASSAGATATSQAALIMQQQSQLHAANAGNAALQQQAALLQQQQAAEYQQLLLSQAGLYDFSAMQQQYAAVGQNAAVAAAQAQAQAQYGALAAAAAANSAGNQQYADYAGVDLTSQQSAHGGYYVRRWA.

The segment at threonine 22–serine 63 is disordered. Residues proline 42 to serine 63 are compositionally biased toward polar residues. Residues glutamate 71–threonine 128 are qua1 domain. A KH domain is found at asparagine 145–valine 171. The qua2 domain; involved in RNA binding stretch occupies residues alanine 230–arginine 253.

In terms of assembly, interacts with sup-12; in the presence of RNA, but with weak affinity in the absence of RNA. Isoform b: Expressed in the hypodermis and pharyngeal muscles. Isoform c: Expressed in body wall muscles and phayngeal muscles.

The protein resides in the nucleus. Functionally, RNA-binding protein that binds to the 5'-NACUAAY-N(1,20)-UAAY-3' consensus sequence in pre-mRNA introns to promote alternative splicing. Required for mutually exclusive alternative splicing where it modulates the switch between mutually exclusive exons during pre-mRNA maturation. Involved in muscle-specific gene expression regulating the alternative splicing of genes such as let-2 and unc-60 to ensure that their respective isoforms are expressed in muscle. Promotes the removal of intron 10 from let-2 pre-mRNA to allow for the exclusive expression of the muscle-specific let-2 isoform (as opposed to the non-muscle-specific isoform expressed in embryos) in body wall muscles during late larval and adult stages of development. Binds cooperatively with RNA-binding protein sup-12 to intron 1A of the unc-60 pre-mRNA to promote alternative splicing and expression of the muscle specific isoform of unc-60. This Caenorhabditis elegans protein is RNA-binding protein asd-2.